We begin with the raw amino-acid sequence, 196 residues long: Probable malonic semialdehyde reductase RutE (196 aa).

This sequence belongs to the nitroreductase family. HadB/RutE subfamily. The cofactor is FMN.

The enzyme catalyses 3-hydroxypropanoate + NADP(+) = 3-oxopropanoate + NADPH + H(+). In terms of biological role, may reduce toxic product malonic semialdehyde to 3-hydroxypropionic acid, which is excreted. The polypeptide is Probable malonic semialdehyde reductase RutE (Escherichia coli (strain SMS-3-5 / SECEC)).